Consider the following 237-residue polypeptide: Ribose-5-phosphate isomerase A (237 aa).

Substrate is bound by residues 30-33 (SGST), 87-90 (DGAD), and 100-103 (KGGG). Residue glutamate 109 is the Proton acceptor of the active site. Position 127 (lysine 127) interacts with substrate.

It belongs to the ribose 5-phosphate isomerase family. As to quaternary structure, homodimer.

It catalyses the reaction aldehydo-D-ribose 5-phosphate = D-ribulose 5-phosphate. It participates in carbohydrate degradation; pentose phosphate pathway; D-ribose 5-phosphate from D-ribulose 5-phosphate (non-oxidative stage): step 1/1. Catalyzes the reversible conversion of ribose-5-phosphate to ribulose 5-phosphate. This chain is Ribose-5-phosphate isomerase A, found in Prochlorococcus marinus (strain MIT 9211).